The primary structure comprises 92 residues: Small ribosomal subunit protein uS15c (92 aa).

It belongs to the universal ribosomal protein uS15 family. As to quaternary structure, part of the 30S ribosomal subunit.

It localises to the plastid. The protein resides in the chloroplast. The polypeptide is Small ribosomal subunit protein uS15c (rps15) (Carica papaya (Papaya)).